Reading from the N-terminus, the 383-residue chain is Decapping nuclease RAI1 (383 aa).

Position 166 (Glu166) interacts with a divalent metal cation. Residue Glu215 coordinates substrate. A divalent metal cation is bound by residues Asp217, Glu235, and Leu236. Substrate contacts are provided by Lys237 and Gln261.

It belongs to the DXO/Dom3Z family. As to quaternary structure, interacts with RAT1; the interaction is direct, stabilizes RAT1 protein structure and stimulates its exoribonuclease activity. The interaction also stimulates RAI1 pyrophosphohydrolase activity, probably by recruiting it to mRNA substrates. The cofactor is a divalent metal cation.

It is found in the nucleus. It carries out the reaction a 5'-end NAD(+)-phospho-ribonucleoside in mRNA + H2O = a 5'-end phospho-ribonucleoside in mRNA + NAD(+) + H(+). The catalysed reaction is a 5'-end (N(7)-methyl 5'-triphosphoguanosine)-ribonucleoside-ribonucleotide in mRNA + H2O = a (N(7)-methyl 5'-triphosphoguanosine)-nucleoside + a 5'-end phospho-ribonucleoside in mRNA + H(+). It catalyses the reaction a 5'-end triphospho-ribonucleoside in mRNA + H2O = a 5'-end phospho-ribonucleoside in mRNA + diphosphate + H(+). Functionally, decapping enzyme for NAD-capped RNAs: specifically hydrolyzes the nicotinamide adenine dinucleotide (NAD) cap from a subset of RNAs by removing the entire NAD moiety from the 5'-end of an NAD-capped RNA. The NAD-cap is present at the 5'-end of some RNAs and snoRNAs. In contrast to the canonical 5'-end N7 methylguanosine (m7G) cap, the NAD cap promotes mRNA decay. Also acts as a non-canonical decapping enzyme that removes the entire cap structure of m7G capped or incompletely capped RNAs. Has decapping activity toward incomplete 5'-end m7G cap mRNAs such as unmethylated 5'-end-capped RNA (cap0), while it has no activity toward 2'-O-ribose methylated m7G cap (cap1). Also possesses RNA 5'-pyrophosphohydrolase activity by hydrolyzing the 5'-end triphosphate to release pyrophosphates. Stimulates exoribonuclease activity of Rat1, allowing it to degrade RNAs with stable secondary structure more effectively. The sequence is that of Decapping nuclease RAI1 from Lachancea thermotolerans (strain ATCC 56472 / CBS 6340 / NRRL Y-8284) (Yeast).